We begin with the raw amino-acid sequence, 689 residues long: Glycine--tRNA ligase beta subunit (689 aa).

This sequence belongs to the class-II aminoacyl-tRNA synthetase family. In terms of assembly, tetramer of two alpha and two beta subunits.

The protein resides in the cytoplasm. The enzyme catalyses tRNA(Gly) + glycine + ATP = glycyl-tRNA(Gly) + AMP + diphosphate. This chain is Glycine--tRNA ligase beta subunit, found in Photorhabdus laumondii subsp. laumondii (strain DSM 15139 / CIP 105565 / TT01) (Photorhabdus luminescens subsp. laumondii).